We begin with the raw amino-acid sequence, 101 residues long: Protein RALF-like 14 (101 aa).

The N-terminal stretch at 1–21 is a signal peptide; that stretch reads MKLLIFAVIISVVLFPVLVSS. A propeptide spans 22–56 (removed in mature form); the sequence is RTIKCDQLSGKCINGEEKEIMNMRLGLDVSSRRIL. Cys90 and Cys96 form a disulfide bridge.

This sequence belongs to the plant rapid alkalinization factor (RALF) family. Proteolytically cleaved, probably by S1P, a subtilisin-like serine protease (subtilase).

The protein localises to the secreted. In terms of biological role, cell signaling peptide that may regulate plant stress, growth, and development. Mediates a rapid alkalinization of extracellular space by mediating a transient increase in the cytoplasmic Ca(2+) concentration leading to a calcium-dependent signaling events through a cell surface receptor and a concomitant activation of some intracellular mitogen-activated protein kinases. The protein is Protein RALF-like 14 (RALFL14) of Arabidopsis thaliana (Mouse-ear cress).